Reading from the N-terminus, the 1072-residue chain is MPKRLDINTILVIGSGPIVIGQAAEFDYSGTQACQSLKEEGYKVILVNSNPATIMTDTATADKVYIEPLTLEFVSRIIRKERPDAILPTLGGQTGLNMAVELAKSGVLDECGVEILGTKLSAIEQAEDRDLFRTLMQDLNEPTPPSEIIHNLDEAYGFVNEIGYPVIVRPAFTLGGTGGGICHNEEELIEIVTSGLKHSPVTQCLLEKSIAGCKEIEYEVMRDSNDNAIVVCNMENIDPVGVHTGDSIVVAPSQTLSDREYQMLRNTSLRIIRALGIEGGCNVQLALDPYSFQYYVIEVNPRVSRSSALASKATGYPIAKLAAKIAVGLTLDEIVNPVTQKTYACFEPALDYVVSKIPRWPFDKFESANRTLGTQMKATGEVMSIGRNLEESLLKAVRSLELGIYHLELDHLKELDKETMKKRIIKADDERLFIVAEAIRQGVTKEEINEWCEMDFFFLQKVENIVNMEREVKANVGNMEVLQIAKEMGFSDHYIAAAWNKTEREIYDMRKENNMMPVFKMVDTCAAEFESATPYYYSTYADENESIVTDRKSVVVLGSGPIRIGQGVEFDYATVHSVWAIKEAGYEAIIINNNPETVSTDFSISDKLYFEPLTIEDVMHIIDLEKPEGVIVQFGGQTAINLAAKLEEHGVKILGTSLEDLDRAEDRDKFEAALTKLGIPQPVGKTATTVEQAVAIAEEIGYPVLVRPSYVLGGRAMEIVYRQEELLHYMKNAVKVHADHPVLIDRYMVGKEIEVDAISDGENVFIPGIMEHIERAGVHSGDSIGVYPPQSLSEKLKEQIIEHTIALGKGLNIVGLLNIQFVVFKDQVYVIEVNPRASRTVPFLSKITGVPMANVATKVILGQDLVEQGYGTGYHPEEKEVYVKAPVFSFAKLRSVDTTLGPEMKSTGEVMGKDLTLEKALYKGLVASGINIPTHGSVIITVADKDKEEAMEIAKRFHEIGYNLLATAGTAQSLEEQNIPVQVVNKIDSEDYNLLDIIRQGKAQFVINTLTKGKQPARDGFRIRRESVENGVACLTSLDTTRAILRVLESMTFSAHSMKEITQTKRHEVVHA.

The segment at 1-401 is carboxyphosphate synthetic domain; the sequence is MPKRLDINTI…SLLKAVRSLE (401 aa). Residues arginine 129, arginine 169, glycine 175, glycine 176, lysine 208, isoleucine 210, glutamate 215, glycine 241, valine 242, histidine 243, glutamine 284, and glutamate 298 each contribute to the ATP site. Residues 133–327 enclose the ATP-grasp 1 domain; sequence RTLMQDLNEP…IAKLAAKIAV (195 aa). The Mg(2+) site is built by glutamine 284, glutamate 298, and asparagine 300. The Mn(2+) site is built by glutamine 284, glutamate 298, and asparagine 300. Residues 402 to 546 are oligomerization domain; sequence LGIYHLELDH…YSTYADENES (145 aa). Residues 547–929 are carbamoyl phosphate synthetic domain; that stretch reads IVTDRKSVVV…ALYKGLVASG (383 aa). Residues 671–861 form the ATP-grasp 2 domain; the sequence is EAALTKLGIP…MANVATKVIL (191 aa). Residues arginine 707, arginine 746, glutamate 752, glycine 777, valine 778, histidine 779, serine 780, glutamine 820, and glutamate 832 each contribute to the ATP site. Positions 820, 832, and 834 each coordinate Mg(2+). Residues glutamine 820, glutamate 832, and asparagine 834 each coordinate Mn(2+). Residues 930–1072 enclose the MGS-like domain; the sequence is INIPTHGSVI…QTKRHEVVHA (143 aa). Residues 930-1072 are allosteric domain; the sequence is INIPTHGSVI…QTKRHEVVHA (143 aa).

It belongs to the CarB family. As to quaternary structure, composed of two chains; the small (or glutamine) chain promotes the hydrolysis of glutamine to ammonia, which is used by the large (or ammonia) chain to synthesize carbamoyl phosphate. Tetramer of heterodimers (alpha,beta)4. The cofactor is Mg(2+). Mn(2+) serves as cofactor.

The catalysed reaction is hydrogencarbonate + L-glutamine + 2 ATP + H2O = carbamoyl phosphate + L-glutamate + 2 ADP + phosphate + 2 H(+). The enzyme catalyses hydrogencarbonate + NH4(+) + 2 ATP = carbamoyl phosphate + 2 ADP + phosphate + 2 H(+). It participates in amino-acid biosynthesis; L-arginine biosynthesis; carbamoyl phosphate from bicarbonate: step 1/1. The protein operates within pyrimidine metabolism; UMP biosynthesis via de novo pathway; (S)-dihydroorotate from bicarbonate: step 1/3. Large subunit of the glutamine-dependent carbamoyl phosphate synthetase (CPSase). CPSase catalyzes the formation of carbamoyl phosphate from the ammonia moiety of glutamine, carbonate, and phosphate donated by ATP, constituting the first step of 2 biosynthetic pathways, one leading to arginine and/or urea and the other to pyrimidine nucleotides. The large subunit (synthetase) binds the substrates ammonia (free or transferred from glutamine from the small subunit), hydrogencarbonate and ATP and carries out an ATP-coupled ligase reaction, activating hydrogencarbonate by forming carboxy phosphate which reacts with ammonia to form carbamoyl phosphate. This chain is Carbamoyl phosphate synthase large chain, found in Bacillus cereus (strain B4264).